The following is a 545-amino-acid chain: MTTNYIFVTGGVVSSLGKGIAAASLAAILEARGLNVTIMKLDPYINVDPGTMSPIQHGEVFVTEDGAETDLDLGHYERFIRTRMTRRNNFTTGRIYSEVLRKERRGDYLGATVQVIPHITNAIKERILAGGEGHDVVLVEIGGTVGDIESLPFLEAIRQMAVEVGREHTMFMHLTLVPYMAAAGEVKTKPTQHSVKELLSIGIQPDVLICRSDRAVPANERAKIALFCNVPEKAVISLKDVDSIYKIPGLLKSQGLDDYICKRFSLNCPEANLSEWEQVIYEEANPVGEVTIGMVGKYIELPDAYKSVIEALKHGGLKNRVTVNIKLIDSQDVETRGEELLKGLDAILIPGGFGYRGVEGKIATARYARENNIPYLGICLGMQVAMIEYARNVAGMENANSTEFVPDCKYPVVALITEWRDENGNVETRSEKSDLGGTMRLGAQQCQLSDDSLVRKLYGEPVITERHRHRYEVNNMLLKPIEAAGLRVAGRSGDDQLVEIIEVPNHPWFVACQFHPEFTSTPRDGHPLFAGFVKAASEYQKRQAK.

An amidoligase domain region spans residues 1-266; sequence MTTNYIFVTG…DDYICKRFSL (266 aa). CTP is bound at residue Ser-14. UTP is bound at residue Ser-14. Residues 15-20 and Asp-72 each bind ATP; that span reads SLGKGI. Residues Asp-72 and Glu-140 each contribute to the Mg(2+) site. CTP is bound by residues 147–149, 187–192, and Lys-223; these read DIE and KTKPTQ. Residues 187–192 and Lys-223 each bind UTP; that span reads KTKPTQ. 239-241 is an ATP binding site; it reads KDV. The Glutamine amidotransferase type-1 domain occupies 291–542; the sequence is TIGMVGKYIE…VKAASEYQKR (252 aa). Gly-352 lines the L-glutamine pocket. The active-site Nucleophile; for glutamine hydrolysis is Cys-379. L-glutamine is bound by residues 380–383, Glu-403, and Arg-470; that span reads LGMQ. Active-site residues include His-515 and Glu-517.

Belongs to the CTP synthase family. In terms of assembly, homotetramer.

It carries out the reaction UTP + L-glutamine + ATP + H2O = CTP + L-glutamate + ADP + phosphate + 2 H(+). The catalysed reaction is L-glutamine + H2O = L-glutamate + NH4(+). It catalyses the reaction UTP + NH4(+) + ATP = CTP + ADP + phosphate + 2 H(+). Its pathway is pyrimidine metabolism; CTP biosynthesis via de novo pathway; CTP from UDP: step 2/2. With respect to regulation, allosterically activated by GTP, when glutamine is the substrate; GTP has no effect on the reaction when ammonia is the substrate. The allosteric effector GTP functions by stabilizing the protein conformation that binds the tetrahedral intermediate(s) formed during glutamine hydrolysis. Inhibited by the product CTP, via allosteric rather than competitive inhibition. Catalyzes the ATP-dependent amination of UTP to CTP with either L-glutamine or ammonia as the source of nitrogen. Regulates intracellular CTP levels through interactions with the four ribonucleotide triphosphates. This Cronobacter sakazakii (strain ATCC BAA-894) (Enterobacter sakazakii) protein is CTP synthase.